We begin with the raw amino-acid sequence, 397 residues long: Na(+)/H(+) antiporter NhaA (397 aa).

Transmembrane regions (helical) follow at residues 14-34, 36-56, 59-79, 95-115, 125-145, 154-174, 177-197, 204-224, 254-274, 292-312, 328-348, and 365-385; these read ASGILLLTFAMFAMLFANTPL, DLYFDFLSMPVSIQIGLFSIY, LLMWVNDGFMAVFFVLIGLEV, IFPAIGALGGMIVPALVFTLI, GWAIPMATDIAFALGVLGLLG, IFLLALAIIDDLGAIVVIAIF, HELSTTALISAAIAIAVLIIM, AICAYMVVGLILWASVLKSGV, LLAPWCSFVILPLFAFSNAGV, VALGLLVGKTLGVFSFSFLAV, IFAVSVLCGIGFTMSMFLAGL, and LGILIGSGISAVLGYYLLKLC.

Belongs to the NhaA Na(+)/H(+) (TC 2.A.33) antiporter family.

The protein localises to the cell inner membrane. It catalyses the reaction Na(+)(in) + 2 H(+)(out) = Na(+)(out) + 2 H(+)(in). Its function is as follows. Na(+)/H(+) antiporter that extrudes sodium in exchange for external protons. This Glaesserella parasuis serovar 5 (strain SH0165) (Haemophilus parasuis) protein is Na(+)/H(+) antiporter NhaA.